Here is a 193-residue protein sequence, read N- to C-terminus: Ribosomal RNA large subunit methyltransferase E (193 aa).

Positions 51, 53, 69, 85, and 108 each coordinate S-adenosyl-L-methionine. K148 (proton acceptor) is an active-site residue.

It belongs to the class I-like SAM-binding methyltransferase superfamily. RNA methyltransferase RlmE family.

The protein resides in the cytoplasm. The catalysed reaction is uridine(2552) in 23S rRNA + S-adenosyl-L-methionine = 2'-O-methyluridine(2552) in 23S rRNA + S-adenosyl-L-homocysteine + H(+). In terms of biological role, specifically methylates the uridine in position 2552 of 23S rRNA at the 2'-O position of the ribose in the fully assembled 50S ribosomal subunit. This chain is Ribosomal RNA large subunit methyltransferase E, found in Methanoregula boonei (strain DSM 21154 / JCM 14090 / 6A8).